A 510-amino-acid chain; its full sequence is NAD(P)H-quinone oxidoreductase subunit 2 B, chloroplastic (510 aa).

13 consecutive transmembrane segments (helical) span residues 24-44 (LLFFDGSLIFPECILIFGLIL), 57-77 (IPWLYFISSTSLVMSITALLF), 99-119 (IFQFLILLCSTLCIPLSVEYI), 124-144 (MAITEFLLFVLTATIGGMFLC), 149-169 (LITIFVAPECFSLCSYLLSGY), 183-203 (YLLMGGASSSILVHGFSWLYG), 227-247 (PGISIALIFITVGIGFKLSPA), 295-315 (WHLLLEILAILSMILGNLIAI), 323-343 (MLAYSSIGQIGYVIIGIIVGD), 354-374 (YMLFYISMNLGTFACIVLFGL), 395-415 (ALSLALCLLSLGGLPPLAGFF), 418-438 (LYLFWCGWQAGLYFLVLIGLL), and 484-504 (MIVCVIASTIPGISMNPIIAI).

It belongs to the complex I subunit 2 family. In terms of assembly, NDH is composed of at least 16 different subunits, 5 of which are encoded in the nucleus.

It localises to the plastid. The protein localises to the chloroplast thylakoid membrane. It catalyses the reaction a plastoquinone + NADH + (n+1) H(+)(in) = a plastoquinol + NAD(+) + n H(+)(out). It carries out the reaction a plastoquinone + NADPH + (n+1) H(+)(in) = a plastoquinol + NADP(+) + n H(+)(out). Functionally, NDH shuttles electrons from NAD(P)H:plastoquinone, via FMN and iron-sulfur (Fe-S) centers, to quinones in the photosynthetic chain and possibly in a chloroplast respiratory chain. The immediate electron acceptor for the enzyme in this species is believed to be plastoquinone. Couples the redox reaction to proton translocation, and thus conserves the redox energy in a proton gradient. This Guizotia abyssinica (Niger) protein is NAD(P)H-quinone oxidoreductase subunit 2 B, chloroplastic.